Here is a 218-residue protein sequence, read N- to C-terminus: MKANTKSKKVNKAWLHDHVNDTYVKLAQKEGYRARAAYKLKEIDETLGLIRPGQVVVDLGSAPGAWSQYLRRRMAPAGAAAGQLNGTLIALDILPMEPIEGVTFLQGDFREEDVLARLQEAVQARPVDVVVSDMAPNLSGVESVDAVRIAHLIELAVDFAQQHLKPDGALVVKLFHGSGYAQLVQLFKEHFRTVKPMKPKASRDKSSETFLVGMGLRK.

5 residues coordinate S-adenosyl-L-methionine: Gly-64, Trp-66, Asp-92, Asp-108, and Asp-133. Catalysis depends on Lys-173, which acts as the Proton acceptor.

Belongs to the class I-like SAM-binding methyltransferase superfamily. RNA methyltransferase RlmE family.

It is found in the cytoplasm. The catalysed reaction is uridine(2552) in 23S rRNA + S-adenosyl-L-methionine = 2'-O-methyluridine(2552) in 23S rRNA + S-adenosyl-L-homocysteine + H(+). In terms of biological role, specifically methylates the uridine in position 2552 of 23S rRNA at the 2'-O position of the ribose in the fully assembled 50S ribosomal subunit. This Paracidovorax citrulli (strain AAC00-1) (Acidovorax citrulli) protein is Ribosomal RNA large subunit methyltransferase E.